A 531-amino-acid polypeptide reads, in one-letter code: Importin subunit alpha-3 (531 aa).

Residues 1–58 enclose the IBB domain; sequence MSLRPSAKTEVRRNRYKVAVDAEEGRRRREDNLVEIRKNKREENLQKKRFTSSMAFGS. ARM repeat units lie at residues 111–153, 154–198, 199–236, 237–281, 282–321, 322–364, 365–405, and 406–447; these read INEV…TSEN, TNVI…CRDL, VLSY…RGKP, PPAF…DKIQ, AVIE…DDLQ, TQMV…NADQ, IQAV…GGTH, and DQIK…VVGE. The disordered stretch occupies residues 500-524; sequence DNEEEGNDENHAPQSGFQFGSTNVP. Polar residues predominate over residues 511 to 524; that stretch reads APQSGFQFGSTNVP.

This sequence belongs to the importin alpha family. As to quaternary structure, forms a complex with importin subunit beta-1. Interacts with PRL1. Interacts with A.tumefaciens VirD2 and VirE2.

The protein localises to the nucleus. Its function is as follows. Binds to conventional NLS motifs and mediates nuclear protein import across the nuclear envelope. Acts as a cellular receptor for the nuclear import of the virD2 protein of Agrobacterium, but is not essential for Agrobacterium-mediated root transformation. May be involved in the regulation of pathogen-induced salicylic acid accumulation. The chain is Importin subunit alpha-3 from Arabidopsis thaliana (Mouse-ear cress).